We begin with the raw amino-acid sequence, 714 residues long: Solute carrier family 12 member 8 (714 aa).

Transmembrane regions (helical) follow at residues 37–60, 72–93, 99–116, 123–142, 154–173, and 185–205; these read VLFG…VLFL, LLGM…LSGI, SSIG…VLGG, GLLY…TGFA, IWAV…GINL, and LLLF…FTHL. N221 is a glycosylation site (N-linked (GlcNAc...) asparagine). Transmembrane regions (helical) follow at residues 233-254, 266-289, 309-331, 360-377, and 383-403; these read FFTV…FNMG, LGSL…LGAI, GFLF…LYGA, PVAA…FVFV, and LAPI…YSYF. 2 disordered regions span residues 471-503 and 530-550; these read KLES…TLQD and GQES…PEGT. Residues 533 to 548 show a composition bias toward polar residues; sequence SCWNKQTSKSEGTQPE. 2 consecutive transmembrane segments (helical) span residues 593-616 and 622-643; these read CNPW…QWVY and GVAA…LGSA.

The protein belongs to the SLC12A transporter family. In terms of tissue distribution, ubiquitous with very low level in normal skin.

It localises to the membrane. Cation/chloride cotransporter that may play a role in the control of keratinocyte proliferation. This Homo sapiens (Human) protein is Solute carrier family 12 member 8 (SLC12A8).